The sequence spans 437 residues: Vitellogenin-1 (437 aa).

The N-terminal stretch at 1–19 is a signal peptide; that stretch reads MNPLKIFCFLALVIAVASA. 2 disordered regions span residues 161-194 and 405-437; these read QQQP…ESWK and PKSP…QNQE. Composition is skewed to polar residues over residues 174-184 and 427-437; these read GSSQGNQGATS and SWKSGKNQNQE.

This sequence belongs to the AB hydrolase superfamily. Lipase family. In terms of tissue distribution, synthesized in the fat body and ovarian follicle cells and accumulate in the oocyte.

It localises to the secreted. In terms of biological role, vitellogenin is the major yolk protein of eggs where it is used as a food source during embryogenesis. This Ceratitis capitata (Mediterranean fruit fly) protein is Vitellogenin-1 (VG1-GAMMA).